The primary structure comprises 482 residues: GPI mannosyltransferase 3 (482 aa).

A helical transmembrane segment spans residues 12 to 32; it reads LFAFIFIFRLANSFAIETFFQ. N-linked (GlcNAc...) asparagine glycosylation is present at N80. 4 consecutive transmembrane segments (helical) span residues 114 to 134, 137 to 155, 175 to 195, and 199 to 219; these read KLAWITLMLSLFNPFNWYVIT, FSNNLEMVFTVLALRFWPW, IIRPTNILIWIPLGIWLLISI, and LKWVALSFLEVVLILLINTAL. The N-linked (GlcNAc...) asparagine glycan is linked to N242. A run of 3 helical transmembrane segments spans residues 252–272, 274–294, and 324–344; these read WHFYIFQAIPLMLMLYLPLMI, GLKKNILLLTGLFYIIGFSLI, and FVLIGILLNICIGLFFTNVHE.

The protein belongs to the glycosyltransferase 22 family. PIGB subfamily.

It localises to the endoplasmic reticulum membrane. The protein operates within glycolipid biosynthesis; glycosylphosphatidylinositol-anchor biosynthesis. Its function is as follows. Mannosyltransferase involved in glycosylphosphatidylinositol-anchor biosynthesis. Transfers the third mannose to Man2-GlcN-acyl-PI during GPI precursor assembly. This Candida albicans (strain SC5314 / ATCC MYA-2876) (Yeast) protein is GPI mannosyltransferase 3 (GPI10).